Consider the following 347-residue polypeptide: MAIPSFSMCHKPELLKEGKSEGQEEEGLSYEFQEMLDSLPKERGRRNRYLYLFQGFRCQAKEIQAITSFQKHFQSLPDDVVLATIPKSGTTWLKALTFTILTRHRFDPVSSSSSDHPLLTSNPHDLVPFFEYKLYANGNVPDLSGLASPRTFATHVPFGALKDSVENPSVKVVYLCRNPFDTFISMWHYINNITSESVSAVLLDEAFDLYCRGLLIGFGPFWEHMLGYWRESLKRPEKVLFLKYEDLKEDIETNLKKLASFLGLPFTEEEEQKGVVKAIADLCSFENLKKLEVNKSSKLIQNYENRFLFRKGEVSDLVNYLSPSQVERLSALVDDKLAGSGLTFRLS.

Position 87–92 (87–92) interacts with 3'-phosphoadenylyl sulfate; sequence KSGTTW. The active-site Proton acceptor is His-155. Residues Arg-177, Ser-185, Tyr-244, and 310–312 contribute to the 3'-phosphoadenylyl sulfate site; that span reads RKG.

The protein belongs to the sulfotransferase 1 family.

Its subcellular location is the cytoplasm. In terms of biological role, sulfotransferase that utilizes 3'-phospho-5'-adenylyl sulfate (PAPS) as sulfonate donor. Not active with 11-hydroxyjasmonate or 12-hydroxyjasmonate. This Arabidopsis thaliana (Mouse-ear cress) protein is Cytosolic sulfotransferase 14 (SOT14).